The chain runs to 240 residues: Large ribosomal subunit protein bL25 (240 aa).

Disordered regions lie at residues 1–23 and 207–240; these read MATVKELKATARPAGGKGAARAE and PAAAPAAGAKAPAAGAKAPAAGAKAPAAPAAKKK.

The protein belongs to the bacterial ribosomal protein bL25 family. CTC subfamily. As to quaternary structure, part of the 50S ribosomal subunit; part of the 5S rRNA/L5/L18/L25 subcomplex. Contacts the 5S rRNA. Binds to the 5S rRNA independently of L5 and L18.

Its function is as follows. This is one of the proteins that binds to the 5S RNA in the ribosome where it forms part of the central protuberance. The polypeptide is Large ribosomal subunit protein bL25 (Rhodopseudomonas palustris (strain BisB18)).